A 339-amino-acid polypeptide reads, in one-letter code: 1-aminocyclopropane-1-carboxylate deaminase (339 aa).

Lys52 carries the post-translational modification N6-(pyridoxal phosphate)lysine. The Nucleophile role is filled by Ser79.

The protein belongs to the ACC deaminase/D-cysteine desulfhydrase family. As to quaternary structure, homotrimer. The cofactor is pyridoxal 5'-phosphate.

It carries out the reaction 1-aminocyclopropane-1-carboxylate + H2O = 2-oxobutanoate + NH4(+). In terms of biological role, catalyzes a cyclopropane ring-opening reaction, the irreversible conversion of 1-aminocyclopropane-1-carboxylate (ACC) to ammonia and alpha-ketobutyrate. Allows growth on ACC as a nitrogen source. In Bradyrhizobium sp. (strain BTAi1 / ATCC BAA-1182), this protein is 1-aminocyclopropane-1-carboxylate deaminase.